The primary structure comprises 82 residues: Putative membrane protein insertion efficiency factor (82 aa).

This sequence belongs to the UPF0161 family.

It is found in the cell inner membrane. Functionally, could be involved in insertion of integral membrane proteins into the membrane. This is Putative membrane protein insertion efficiency factor from Rickettsia massiliae (strain Mtu5).